The chain runs to 275 residues: Polyamine aminopropyltransferase (275 aa).

The region spanning E2 to K235 is the PABS domain. Q31 contacts S-methyl-5'-thioadenosine. 2 residues coordinate spermidine: H62 and D86. Residues E106 and D137 to G138 contribute to the S-methyl-5'-thioadenosine site. The active-site Proton acceptor is D155. A spermidine-binding site is contributed by D155 to E158. P162 serves as a coordination point for S-methyl-5'-thioadenosine.

Belongs to the spermidine/spermine synthase family. As to quaternary structure, homodimer or homotetramer.

The protein resides in the cytoplasm. The catalysed reaction is S-adenosyl 3-(methylsulfanyl)propylamine + putrescine = S-methyl-5'-thioadenosine + spermidine + H(+). It functions in the pathway amine and polyamine biosynthesis; spermidine biosynthesis; spermidine from putrescine: step 1/1. In terms of biological role, catalyzes the irreversible transfer of a propylamine group from the amino donor S-adenosylmethioninamine (decarboxy-AdoMet) to putrescine (1,4-diaminobutane) to yield spermidine. The chain is Polyamine aminopropyltransferase from Bacillus mycoides (strain KBAB4) (Bacillus weihenstephanensis).